Reading from the N-terminus, the 277-residue chain is Ribonuclease HII (277 aa).

The RNase H type-2 domain occupies 20–250; that stretch reads KLIIGLDEAG…SKKLLKKIED (231 aa). A divalent metal cation-binding residues include aspartate 26, glutamate 27, and aspartate 141.

It belongs to the RNase HII family. Mn(2+) is required as a cofactor. Requires Mg(2+) as cofactor.

It is found in the cytoplasm. It catalyses the reaction Endonucleolytic cleavage to 5'-phosphomonoester.. Functionally, endonuclease that specifically degrades the RNA of RNA-DNA hybrids. The protein is Ribonuclease HII of Methanococcus aeolicus (strain ATCC BAA-1280 / DSM 17508 / OCM 812 / Nankai-3).